The sequence spans 248 residues: MDVKIDGPLYSGKAKDVLLTDDPEIVAVRFRDDITAGDGEKKDTLEMKGYYNSVISAKIFEVLEEAGVPTQYLELREPGCILARKLEMIPIEVITRNIAAGSIVRRFPFTEGQEFVPPLIQMDYKSDEHGDPMLNDDIILALGIATRDELEEIRRITLHINSVLRDFLKSRGLILPDFKLEFGRDSSGRIRLGDEVSPDTCRLWDMETGEPLDKDIFRRGEEGVVGAYRRVARMILDDEDIERWNVEL.

This sequence belongs to the SAICAR synthetase family.

The enzyme catalyses 5-amino-1-(5-phospho-D-ribosyl)imidazole-4-carboxylate + L-aspartate + ATP = (2S)-2-[5-amino-1-(5-phospho-beta-D-ribosyl)imidazole-4-carboxamido]succinate + ADP + phosphate + 2 H(+). It participates in purine metabolism; IMP biosynthesis via de novo pathway; 5-amino-1-(5-phospho-D-ribosyl)imidazole-4-carboxamide from 5-amino-1-(5-phospho-D-ribosyl)imidazole-4-carboxylate: step 1/2. In Methanothermobacter thermautotrophicus (strain ATCC 29096 / DSM 1053 / JCM 10044 / NBRC 100330 / Delta H) (Methanobacterium thermoautotrophicum), this protein is Phosphoribosylaminoimidazole-succinocarboxamide synthase (purC).